The chain runs to 441 residues: UBX domain-containing protein 6 (441 aa).

The segment at 1-10 (MKKFFQEIKA) is mediates interaction with LMAN1. Disordered regions lie at residues 12–57 (IKFK…MAAA), 62–81 (RLEQ…SIRN), and 86–113 (ELRA…EEGS). Positions 27 to 36 (VGEKAPKEKP) are enriched in basic and acidic residues. A VCP/p97-interacting motif (VIM) region spans residues 51–63 (EAQMAAAAALARL). In terms of domain architecture, PUB spans 175–244 (VDTIAKYLDN…GPEEFYVLSE (70 aa)). One can recognise a UBX domain in the interval 332–408 (RKYTYTLLRV…GLVPSALLTF (77 aa)).

Interacts with VCP through the PUB domain (via C-terminus) and VIM motif (via N-terminus); the interaction is direct. Forms a ternary complex with CAV1 and VCP. Interacts with SYVN1. Interacts with HERPUD1. Interacts with VCPKMT. May interact with DERL1. Interacts with PLAA, VCP and YOD1; may form a complex involved in macroautophagy. Interacts with LMAN1.

The protein resides in the cytoplasm. It localises to the cytosol. Its subcellular location is the membrane. The protein localises to the nucleus. It is found in the cytoskeleton. The protein resides in the microtubule organizing center. It localises to the centrosome. Its subcellular location is the early endosome membrane. The protein localises to the late endosome membrane. It is found in the lysosome membrane. Functionally, may negatively regulate the ATPase activity of VCP, an ATP-driven segregase that associates with different cofactors to control a wide variety of cellular processes. As a cofactor of VCP, it may play a role in the transport of CAV1 to lysosomes for degradation. It may also play a role in endoplasmic reticulum-associated degradation (ERAD) of misfolded proteins. Together with VCP and other cofactors, it may play a role in macroautophagy, regulating for instance the clearance of damaged lysosomes. The sequence is that of UBX domain-containing protein 6 from Bos taurus (Bovine).